The following is a 294-amino-acid chain: Putative sugar lactone lactonase (294 aa).

A divalent metal cation is bound by residues E21, N150, and D201. D201 serves as the catalytic Proton donor/acceptor.

The protein belongs to the SMP-30/CGR1 family. A divalent metal cation is required as a cofactor.

Its function is as follows. Involved in the degradation of galactose via the DeLey-Doudoroff pathway. The chain is Putative sugar lactone lactonase from Rhizobium meliloti (strain 1021) (Ensifer meliloti).